The sequence spans 385 residues: Basigin (385 aa).

The first 21 residues, 1–21 (MAAALFVLLGFALLGTHGASG), serve as a signal peptide directing secretion. The Ig-like domain maps to 37 to 120 (GGSVELHCEA…SNDPDRNHLT (84 aa)). Cystine bridges form between Cys44-Cys108, Cys157-Cys203, and Cys242-Cys301. The 82-residue stretch at 138–219 (EPGTVFTTVE…MGTANIQLHG (82 aa)) folds into the Ig-like C2-type domain. Topologically, residues 138 to 323 (EPGTVFTTVE…ITLRVRSHLA (186 aa)) are extracellular. N-linked (GlcNAc...) asparagine glycosylation is present at Asn160. The segment at 195–199 (DDQWG) is essential for interaction with KDR/VEGFR2. An Ig-like V-type domain is found at 221 to 315 (PRVKAVKSSE…SKGSDQAIIT (95 aa)). Asn268 and Asn302 each carry an N-linked (GlcNAc...) asparagine glycan. Residues 324–344 (ALWPFLGIVAEVLVLVTIIFI) traverse the membrane as a helical segment. At 345–385 (YEKRRKPEDVLDDDDAGSAPLKSSGQHQNDKGKNVRQRNSS) the chain is on the cytoplasmic side. Residues 353-385 (DVLDDDDAGSAPLKSSGQHQNDKGKNVRQRNSS) form a disordered region. Ser362 and Ser368 each carry phosphoserine.

As to quaternary structure, homooligomer. Interacts with NXNL1. Interacts with SLC2A1 and SLC16A1/GLUT1. Interacts with XKR8; promoting its localization at the cell membrane. In terms of assembly, (Microbial infection) Interacts with P.falciparum (isolate 3D7) RH5/PfRH5; the interaction is required for the invasion of the host erythrocytes by the parasite at the merozoite stage. Homooligomer. Forms heterooligomers with isoform 3. Interacts with VEGFA and KDR/VEGFR2. Interacts with PPIA/CYPA. Interacts with PPIL2; regulates BSG transport to the cell membrane. Interacts with SLC16A1; interaction mediates SLC16A3 targeting to the plasma membrane. Interacts with SLC16A12. Interacts with SLC16A11. Interacts with AJAP1. Interacts with SLC1A3, ATP1B2, MAG and L1CAM. Interacts with SLC16A3; interaction mediates SLC16A3 targeting to the plasma membrane. As to quaternary structure, (Microbial infection) Interacts with P.falciparum (isolates 3D7 or 7G8) RH5/PfRH5; the interaction is required for the invasion of the host erythrocytes by the parasite at the merozoite stage. In terms of assembly, (Microbial infection) Does not interact with severe acute respiratory syndrome coronavirus 2 (SARS-CoV-2) spike glycoprotein, even if previous works were based on a putative interaction. Forms heterooligomers with isoform 2. As to quaternary structure, interacts with SLC16A6; this interaction mediates targeting to the plasma membrane. Post-translationally, N-glycosylated. As to expression, retina-specific. Expressed in retinal cone photoreceptors (at protein level). In terms of tissue distribution, expressed in erythrocytes (at protein level). Highly expressed in melanoma cell lines (at protein level). Highly expressed in the heart, kidney, skeletal muscle and testis. Highly expressed in the bone marrow, fetal liver, lung, testis and thymus.

The protein resides in the melanosome. It localises to the cell membrane. The protein localises to the photoreceptor inner segment. It is found in the cell projection. Its subcellular location is the cilium. The protein resides in the photoreceptor outer segment. It localises to the endosome. The protein localises to the endoplasmic reticulum membrane. It is found in the basolateral cell membrane. Its function is as follows. Essential for normal retinal maturation and development. Acts as a retinal cell surface receptor for NXNL1 and plays an important role in NXNL1-mediated survival of retinal cone photoreceptors. In association with glucose transporter SLC16A1/GLUT1 and NXNL1, promotes retinal cone survival by enhancing aerobic glycolysis and accelerating the entry of glucose into photoreceptors. May act as a potent stimulator of IL6 secretion in multiple cell lines that include monocytes. In terms of biological role, (Microbial infection) Erythrocyte receptor for P.falciparum RH5 which is essential for erythrocyte invasion by the merozoite stage of P.falciparum isolates 3D7 and Dd2. Signaling receptor for cyclophilins, essential for PPIA/CYPA and PPIB/CYPB-dependent signaling related to chemotaxis and adhesion of immune cells. Plays an important role in targeting monocarboxylate transporters SLC16A1/GLUT1, SLC16A11 and SLC16A12 to the plasma membrane. Acts as a coreceptor for vascular endothelial growth factor receptor 2 (KDR/VEGFR2) in endothelial cells enhancing its VEGFA-mediated activation and downstream signaling. Promotes angiogenesis through EPAS1/HIF2A-mediated up-regulation of VEGFA (isoform VEGF-165 and VEGF-121) and KDR/VEGFR2 in endothelial cells. Plays a key role in regulating tumor growth, invasion, metastasis and neoangiogenesis by stimulating the production and release of extracellular matrix metalloproteinases and KDR/VEGFR2 by both tumor cells and stromal cells (fibroblasts and endothelial cells). Functionally, (Microbial infection) Erythrocyte receptor for P.falciparum RH5 which is essential for erythrocyte invasion by the merozoite stage of P.falciparum isolates 3D7, Dd2, 7G8 and HB3. Binding of P.falciparum RH5 results in BSG dimerization which triggers an increase in intracellular Ca(2+) in the erythrocyte. This essential step leads to a rearrangement of the erythrocyte cytoskeleton required for the merozoite invasion. Its function is as follows. (Microbial infection) Can facilitate human SARS coronavirus (SARS-CoV-1) infection via its interaction with virus-associated PPIA/CYPA. In terms of biological role, (Microbial infection) Can facilitate HIV-1 infection via its interaction with virus-associated PPIA/CYPA. (Microbial infection) First described as a receptor for severe acute respiratory syndrome coronavirus 2 (SARS-CoV-2), it is not required for SARS-CoV-2 infection. Functionally, (Microbial infection) Acts as a receptor for measles virus. Its function is as follows. (Microbial infection) Promotes entry of pentamer-expressing human cytomegalovirus (HCMV) into epithelial and endothelial cells. The sequence is that of Basigin from Homo sapiens (Human).